A 639-amino-acid chain; its full sequence is Chaperone protein HtpG (639 aa).

Residues 1-347 form an a; substrate-binding region; that stretch reads MSHQETHGFQ…SNDLPLNVSR (347 aa). The b stretch occupies residues 348–564; it reads EILQDNKITT…AGEMSSQMIK (217 aa). A c region spans residues 565–639; sequence LMQAAGQAVT…MNKMLLASVK (75 aa).

This sequence belongs to the heat shock protein 90 family. Homodimer.

The protein resides in the cytoplasm. Molecular chaperone. Has ATPase activity. The protein is Chaperone protein HtpG of Shewanella loihica (strain ATCC BAA-1088 / PV-4).